We begin with the raw amino-acid sequence, 143 residues long: Large ribosomal subunit protein uL13 (143 aa).

Belongs to the universal ribosomal protein uL13 family. Part of the 50S ribosomal subunit.

This protein is one of the early assembly proteins of the 50S ribosomal subunit, although it is not seen to bind rRNA by itself. It is important during the early stages of 50S assembly. The protein is Large ribosomal subunit protein uL13 of Thermoanaerobacter pseudethanolicus (strain ATCC 33223 / 39E) (Clostridium thermohydrosulfuricum).